Consider the following 490-residue polypeptide: ATP synthase subunit beta, chloroplastic (490 aa).

170–177 contributes to the ATP binding site; the sequence is GGAGVGKT.

The protein belongs to the ATPase alpha/beta chains family. F-type ATPases have 2 components, CF(1) - the catalytic core - and CF(0) - the membrane proton channel. CF(1) has five subunits: alpha(3), beta(3), gamma(1), delta(1), epsilon(1). CF(0) has four main subunits: a(1), b(1), b'(1) and c(9-12).

It is found in the plastid. The protein resides in the chloroplast thylakoid membrane. The enzyme catalyses ATP + H2O + 4 H(+)(in) = ADP + phosphate + 5 H(+)(out). Its function is as follows. Produces ATP from ADP in the presence of a proton gradient across the membrane. The catalytic sites are hosted primarily by the beta subunits. The protein is ATP synthase subunit beta, chloroplastic of Ipomoea quamoclit (Cypress vine).